Reading from the N-terminus, the 404-residue chain is Cysteine desulfurase IscS (404 aa).

Residues 75 to 76 (AT), N155, Q183, and 203 to 205 (SAH) each bind pyridoxal 5'-phosphate. At K206 the chain carries N6-(pyridoxal phosphate)lysine. T243 lines the pyridoxal 5'-phosphate pocket. The Cysteine persulfide intermediate role is filled by C328. C328 is a [2Fe-2S] cluster binding site.

Belongs to the class-V pyridoxal-phosphate-dependent aminotransferase family. NifS/IscS subfamily. In terms of assembly, homodimer. Forms a heterotetramer with IscU, interacts with other sulfur acceptors. Pyridoxal 5'-phosphate is required as a cofactor.

Its subcellular location is the cytoplasm. The enzyme catalyses (sulfur carrier)-H + L-cysteine = (sulfur carrier)-SH + L-alanine. It participates in cofactor biosynthesis; iron-sulfur cluster biosynthesis. In terms of biological role, master enzyme that delivers sulfur to a number of partners involved in Fe-S cluster assembly, tRNA modification or cofactor biosynthesis. Catalyzes the removal of elemental sulfur atoms from cysteine to produce alanine. Functions as a sulfur delivery protein for Fe-S cluster synthesis onto IscU, an Fe-S scaffold assembly protein, as well as other S acceptor proteins. In Pseudomonas fluorescens (strain Pf0-1), this protein is Cysteine desulfurase IscS.